Reading from the N-terminus, the 472-residue chain is Eukaryotic translation initiation factor 2 subunit 3 (472 aa).

Positions 39–247 (QATINIGTIG…YIVNKIPVPV (209 aa)) constitute a tr-type G domain. The tract at residues 48 to 55 (GHVAHGKS) is G1. 51 to 56 (AHGKST) contributes to the GTP binding site. A G2 region spans residues 76–80 (NITIK). Residues 134 to 137 (DCPG) are G3. GTP contacts are provided by residues 190–193 (NKID) and 225–227 (SAQ). The tract at residues 190-193 (NKID) is G4. The G5 stretch occupies residues 225 to 227 (SAQ). The tract at residues 457–469 (GQIRRGVTITPTV) is interacts with cdc123.

The protein belongs to the TRAFAC class translation factor GTPase superfamily. Classic translation factor GTPase family. EIF2G subfamily. Eukaryotic translation initiation factor 2 eIF2 is a heterotrimeric complex composed of an alpha (EIF2S1), a beta (EIF2S2) and a gamma (EIF2S3) chain. eIF2 is member of the 43S pre-initiation complex (43S PIC).

Its subcellular location is the cytoplasm. The protein resides in the cytosol. The enzyme catalyses GTP + H2O = GDP + phosphate + H(+). Its function is as follows. Member of the eIF2 complex that functions in the early steps of protein synthesis by forming a ternary complex with GTP and initiator tRNA. This complex binds to a 40S ribosomal subunit, followed by mRNA binding to form the 43S pre-initiation complex (43S PIC). Junction of the 60S ribosomal subunit to form the 80S initiation complex is preceded by hydrolysis of the GTP bound to eIF2 and release of an eIF2-GDP binary complex. In order for eIF2 to recycle and catalyze another round of initiation, the GDP bound to eIF2 must exchange with GTP by way of a reaction catalyzed by eIF-2B. The polypeptide is Eukaryotic translation initiation factor 2 subunit 3 (Danio rerio (Zebrafish)).